The primary structure comprises 237 residues: C-type lectin domain family 4 member A (237 aa).

The Cytoplasmic segment spans residues 1 to 48 (MTSEITYAEVRFKNEFKSSGINTASSAASKERTAPHKSNTGFPKLLCA). The short motif at 5-10 (ITYAEV) is the ITIM motif element. A helical; Signal-anchor for type II membrane protein transmembrane segment spans residues 49–69 (SLLIFFLLLAISFFIAFVIFF). At 70-237 (QKYSQLLEKK…SVCEMMKIHL (168 aa)) the chain is on the extracellular side. 3 disulfides stabilise this stretch: Cys-106–Cys-117, Cys-134–Cys-230, and Cys-203–Cys-222. The C-type lectin domain maps to 113 to 231 (FSSNCYFIST…CLGPQRSVCE (119 aa)). Residues Val-143, Asn-145, and Glu-149 each coordinate Ca(2+). The N-linked (GlcNAc...) asparagine glycan is linked to Asn-185. Residues Glu-195, Ser-197, and Glu-201 each coordinate Ca(2+). Alpha-D-mannopyranose is bound by residues 195-197 (EPS) and Glu-201. 207–209 (NFR) contributes to the N-acetyl-D-glucosamine binding site. The Ca(2+) site is built by Asn-218, Asp-219, and Glu-231.

As to quaternary structure, may interact with PTPN6 via its ITIM motif. Expressed preferentially in hematopoietic tissues. Expressed in all circulating Ag-presenting cells such as dendritic cells, myeloid cells, monocytes, macrophages, B-cells and epidermal Langerhans cells (at protein level). Expressed in peripheral blood leukocytes, neutrophils, moderate quantities in spleen, lymph node, and bone marrow, and at very low levels in thymus.

The protein resides in the cell membrane. C-type lectin receptor that binds carbohydrates mannose and fucose but also weakly interacts with N-acetylglucosamine (GlcNAc) in a Ca(2+)-dependent manner. Involved in regulating immune reactivity. Once triggered by antigen, it is internalized by clathrin-dependent endocytosis and delivers its antigenic cargo into the antigen presentation pathway resulting in cross-priming of CD8(+) T cells. This cross-presentation and cross-priming are enhanced by TLR7 and TLR8 agonists with increased expansion of the CD8(+) T cells, high production of IFNG and TNF with reduced levels of IL4, IL5 and IL13. In plasmacytoid dendritic cells, inhibits TLR9-mediated IFNA and TNF production. May be involved via its ITIM motif (immunoreceptor tyrosine-based inhibitory motifs) in the inhibition of B-cell-receptor-mediated calcium mobilization and protein tyrosine phosphorylation. Its function is as follows. (Microbial infection) Involved in the interaction between HIV-1 virus and dendritic cells. Enhances HIV-1 binding/entry and virus infection. Requires ITIM motif-associated signal transduction pathway involving phosphatases PTPN6 and PTPN11, SYK, Src kinases and MAP kinases. The chain is C-type lectin domain family 4 member A from Homo sapiens (Human).